A 379-amino-acid polypeptide reads, in one-letter code: Queuine tRNA-ribosyltransferase (379 aa).

The Proton acceptor role is filled by D94. Residues 94-98, D148, Q191, and G218 contribute to the substrate site; that span reads DSGGF. The RNA binding stretch occupies residues 249–255; the sequence is GVGSPDA. The Nucleophile role is filled by D268. The segment at 273-277 is RNA binding; important for wobble base 34 recognition; sequence TRIAR. Zn(2+) contacts are provided by C306, C308, C311, and H337.

This sequence belongs to the queuine tRNA-ribosyltransferase family. In terms of assembly, homodimer. Within each dimer, one monomer is responsible for RNA recognition and catalysis, while the other monomer binds to the replacement base PreQ1. It depends on Zn(2+) as a cofactor.

The enzyme catalyses 7-aminomethyl-7-carbaguanine + guanosine(34) in tRNA = 7-aminomethyl-7-carbaguanosine(34) in tRNA + guanine. It functions in the pathway tRNA modification; tRNA-queuosine biosynthesis. Its function is as follows. Catalyzes the base-exchange of a guanine (G) residue with the queuine precursor 7-aminomethyl-7-deazaguanine (PreQ1) at position 34 (anticodon wobble position) in tRNAs with GU(N) anticodons (tRNA-Asp, -Asn, -His and -Tyr). Catalysis occurs through a double-displacement mechanism. The nucleophile active site attacks the C1' of nucleotide 34 to detach the guanine base from the RNA, forming a covalent enzyme-RNA intermediate. The proton acceptor active site deprotonates the incoming PreQ1, allowing a nucleophilic attack on the C1' of the ribose to form the product. After dissociation, two additional enzymatic reactions on the tRNA convert PreQ1 to queuine (Q), resulting in the hypermodified nucleoside queuosine (7-(((4,5-cis-dihydroxy-2-cyclopenten-1-yl)amino)methyl)-7-deazaguanosine). The chain is Queuine tRNA-ribosyltransferase from Oceanobacillus iheyensis (strain DSM 14371 / CIP 107618 / JCM 11309 / KCTC 3954 / HTE831).